Reading from the N-terminus, the 83-residue chain is Small ribosomal subunit protein bS18 (83 aa).

This sequence belongs to the bacterial ribosomal protein bS18 family. As to quaternary structure, part of the 30S ribosomal subunit. Forms a tight heterodimer with protein bS6.

Its function is as follows. Binds as a heterodimer with protein bS6 to the central domain of the 16S rRNA, where it helps stabilize the platform of the 30S subunit. This is Small ribosomal subunit protein bS18 from Cytophaga hutchinsonii (strain ATCC 33406 / DSM 1761 / CIP 103989 / NBRC 15051 / NCIMB 9469 / D465).